The primary structure comprises 513 residues: Probable cytosol aminopeptidase (513 aa).

Positions 275 and 280 each coordinate Mn(2+). Lysine 287 is an active-site residue. Residues aspartate 298, aspartate 357, and glutamate 359 each coordinate Mn(2+). Arginine 361 is an active-site residue.

The protein belongs to the peptidase M17 family. Mn(2+) is required as a cofactor.

The protein localises to the cytoplasm. It carries out the reaction Release of an N-terminal amino acid, Xaa-|-Yaa-, in which Xaa is preferably Leu, but may be other amino acids including Pro although not Arg or Lys, and Yaa may be Pro. Amino acid amides and methyl esters are also readily hydrolyzed, but rates on arylamides are exceedingly low.. It catalyses the reaction Release of an N-terminal amino acid, preferentially leucine, but not glutamic or aspartic acids.. Functionally, presumably involved in the processing and regular turnover of intracellular proteins. Catalyzes the removal of unsubstituted N-terminal amino acids from various peptides. This is Probable cytosol aminopeptidase from Streptomyces avermitilis (strain ATCC 31267 / DSM 46492 / JCM 5070 / NBRC 14893 / NCIMB 12804 / NRRL 8165 / MA-4680).